Here is a 610-residue protein sequence, read N- to C-terminus: UvrABC system protein C (610 aa).

Positions 16–94 constitute a GIY-YIG domain; the sequence is SQPGVYRMYD…IKLYQPRYNV (79 aa). A UVR domain is found at 204–239; sequence QQVLNQLISRMESASRDLRFEDAARIRDQIQAVRRV.

This sequence belongs to the UvrC family. In terms of assembly, interacts with UvrB in an incision complex.

The protein resides in the cytoplasm. Functionally, the UvrABC repair system catalyzes the recognition and processing of DNA lesions. UvrC both incises the 5' and 3' sides of the lesion. The N-terminal half is responsible for the 3' incision and the C-terminal half is responsible for the 5' incision. The protein is UvrABC system protein C of Pectobacterium atrosepticum (strain SCRI 1043 / ATCC BAA-672) (Erwinia carotovora subsp. atroseptica).